Consider the following 179-residue polypeptide: Exosome complex component Csl4 (179 aa).

The 80-residue stretch at 58 to 137 folds into the S1 motif domain; that stretch reads GDVVLGRVVD…RLSTKEEEMG (80 aa). The Zn(2+) site is built by Cys-143, Cys-146, Cys-159, and Cys-162.

This sequence belongs to the CSL4 family. Component of the archaeal exosome complex. Forms a trimer of Rrp4 and/or Csl4 subunits. The trimer associates with a hexameric ring-like arrangement composed of 3 Rrp41-Rrp42 heterodimers. Interacts with DnaG.

Its subcellular location is the cytoplasm. Its function is as follows. Non-catalytic component of the exosome, which is a complex involved in RNA degradation. Increases the RNA binding and the efficiency of RNA degradation. Helpful for the interaction of the exosome with A-poor RNAs. The polypeptide is Exosome complex component Csl4 (Archaeoglobus fulgidus (strain ATCC 49558 / DSM 4304 / JCM 9628 / NBRC 100126 / VC-16)).